The following is a 156-amino-acid chain: Protein-export protein SecB (156 aa).

The protein belongs to the SecB family. Homotetramer, a dimer of dimers. One homotetramer interacts with 1 SecA dimer.

The protein resides in the cytoplasm. Functionally, one of the proteins required for the normal export of preproteins out of the cell cytoplasm. It is a molecular chaperone that binds to a subset of precursor proteins, maintaining them in a translocation-competent state. It also specifically binds to its receptor SecA. This chain is Protein-export protein SecB, found in Yersinia enterocolitica serotype O:8 / biotype 1B (strain NCTC 13174 / 8081).